The sequence spans 198 residues: NAD(P)H dehydrogenase (quinone) (198 aa).

In terms of domain architecture, Flavodoxin-like spans 4–189 (ILVLYYSMYG…SIARYQGEYV (186 aa)). FMN contacts are provided by residues 10-15 (SMYGHI) and 78-80 (TRF). NAD(+) is bound at residue tyrosine 12. Tryptophan 98 lines the substrate pocket. Residues 113-118 (STGTGG) and histidine 133 contribute to the FMN site.

Belongs to the WrbA family. The cofactor is FMN.

It catalyses the reaction a quinone + NADH + H(+) = a quinol + NAD(+). The enzyme catalyses a quinone + NADPH + H(+) = a quinol + NADP(+). This chain is NAD(P)H dehydrogenase (quinone), found in Salmonella agona (strain SL483).